Consider the following 79-residue polypeptide: Serine protease inhibitor Kazal-type 1 (79 aa).

The N-terminal stretch at 1–18 is a signal peptide; sequence MKVAIIFLLSALALLSLA. In terms of domain architecture, Kazal-like spans 26–79; sequence NGKTPNCPKQIMGCPRIYDPVCGTNGITYPSECSLCFENRKFGTSIHIQRRGTC. Intrachain disulfides connect C32-C61, C39-C58, and C47-C79.

The protein localises to the secreted. Functionally, serine protease inhibitor which exhibits anti-trypsin activity. In the pancreas, protects against trypsin-catalyzed premature activation of zymogens. In terms of biological role, in the male reproductive tract, binds to sperm heads where it modulates sperm capacitance by inhibiting calcium uptake and nitrogen oxide (NO) production. The polypeptide is Serine protease inhibitor Kazal-type 1 (Rattus norvegicus (Rat)).